The following is a 625-amino-acid chain: Interleukin-1 receptor-associated kinase-like 2 (625 aa).

Positions 13–94 constitute a Death domain; the sequence is LDDPCRNMDA…RAAQIILNWK (82 aa). Residues 111 to 181 are disordered; that stretch reads KPEKPLAASV…SSDSKDFSTS (71 aa). Ser144 is subject to Phosphoserine. The span at 169–181 shows a compositional bias: polar residues; sequence LPTSSDSKDFSTS. In terms of domain architecture, Protein kinase spans 210-503; it reads FNQNHKISQG…GSVAAVEEWL (294 aa). Residues 216–224, Lys237, and 337–340 each bind ATP; these read ISQGTFADV and KSSN. The disordered stretch occupies residues 513–539; it reads SGLSEGTGSSSNTPEETDDVDNSSLDA. Residues 516 to 526 are compositionally biased toward polar residues; sequence SEGTGSSSNTP.

It belongs to the protein kinase superfamily. TKL Ser/Thr protein kinase family. Pelle subfamily. In terms of assembly, interacts with MYD88. IL-1 stimulation leads to the formation of a signaling complex which dissociates from the IL-1 receptor following the binding of PELI1.

Binds to the IL-1 type I receptor following IL-1 engagement, triggering intracellular signaling cascades leading to transcriptional up-regulation and mRNA stabilization. This chain is Interleukin-1 receptor-associated kinase-like 2 (IRAK2), found in Pongo abelii (Sumatran orangutan).